The primary structure comprises 217 residues: MNIVLMGLPGAGKGTQADKIVEKYAIPHISTGDMFRAAIKEGTELGLQAKSFMDQGALVPDEVTIGIVRERLAKPDCEKGFLLDGFPRTVPQAEALDSILADLGKAIEHTLNIQVEKDELIARLSGRRICKTCGASYHLIFNPPAEEGKCDKDGGELYTRADDNPDTVANRLEVNMKQAQPLLDFYQAKGVLTNIDGQQDINKVFADLDALLQSSRS.

10-15 (GAGKGT) contributes to the ATP binding site. The NMP stretch occupies residues 30–59 (STGDMFRAAIKEGTELGLQAKSFMDQGALV). AMP is bound by residues Thr31, Arg36, 57–59 (ALV), 85–88 (GFPR), and Gln92. Positions 126–163 (GRRICKTCGASYHLIFNPPAEEGKCDKDGGELYTRADD) are LID. An ATP-binding site is contributed by Arg127. Zn(2+) is bound by residues Cys130 and Cys133. 136–137 (SY) serves as a coordination point for ATP. Zn(2+)-binding residues include Cys150 and Asp153. AMP-binding residues include Arg160 and Arg171. Residue Gln199 coordinates ATP.

It belongs to the adenylate kinase family. Monomer.

It localises to the cytoplasm. It catalyses the reaction AMP + ATP = 2 ADP. Its pathway is purine metabolism; AMP biosynthesis via salvage pathway; AMP from ADP: step 1/1. Functionally, catalyzes the reversible transfer of the terminal phosphate group between ATP and AMP. Plays an important role in cellular energy homeostasis and in adenine nucleotide metabolism. In Lysinibacillus sphaericus (strain C3-41), this protein is Adenylate kinase.